We begin with the raw amino-acid sequence, 88 residues long: Three-finger toxin 3FTx-2 (88 aa).

A signal peptide spans 1–21 (MKTLLLTLVVVTIVCLDLGNT). 4 cysteine pairs are disulfide-bonded: C27–C48, C41–C66, C70–C81, and C82–C87.

The protein belongs to the three-finger toxin family. Ancestral subfamily. Orphan group II sub-subfamily. In terms of tissue distribution, expressed by the venom gland.

The protein localises to the secreted. Binds with low affinity to muscular (alpha-1-beta-1-delta-epsilon/CHRNA1-CHRNB1-CHRND-CHRNE) and very low affinity to neuronal (alpha-7/CHRNA7) nicotinic acetylcholine receptor (nAChR). The chain is Three-finger toxin 3FTx-2 from Micrurus corallinus (Brazilian coral snake).